Consider the following 744-residue polypeptide: Leukocyte immunoglobulin-like receptor subfamily B member 3A (744 aa).

An N-terminal signal peptide occupies residues 1–24 (MTFTFTALLCLGLTLGLWIPVLTG). At 25 to 543 (SLPKPILRVQ…PPDGLQRYLK (519 aa)) the chain is on the extracellular side. Ig-like C2-type domains are found at residues 26 to 119 (LPKP…VVTG), 121 to 221 (YSKP…LVSG), 223 to 316 (LQKP…VVTG), 320 to 419 (YHPL…LITG), and 426 to 520 (FLSV…IVSG). 3 disulfides stabilise this stretch: cysteine 49–cysteine 98, cysteine 144–cysteine 197, and cysteine 246–cysteine 295. The N-linked (GlcNAc...) asparagine glycan is linked to asparagine 79. An N-linked (GlcNAc...) asparagine glycan is attached at asparagine 338. A disulfide bridge links cysteine 343 with cysteine 395. Asparagine 440 carries N-linked (GlcNAc...) asparagine glycosylation. The cysteines at positions 445 and 496 are disulfide-linked. The helical transmembrane segment at 544 to 564 (ALIGVSVAFLLFLFILIFILL) threads the bilayer. Residues 565–744 (RRRHQEKFRK…PGAVPKNKKQ (180 aa)) lie on the Cytoplasmic side of the membrane. Positions 572–584 (FRKDDEDAQKGKE) are enriched in basic and acidic residues. Disordered regions lie at residues 572–617 (FRKD…ESLY), 630–652 (ELDT…VEPS), and 667–744 (EQLN…NKKQ). Residues 615-620 (SLYASV) carry the ITIM motif 1 motif. 2 short sequence motifs (ITIM motif) span residues 695–700 (VTYAQL) and 725–730 (SVYAAL). Tyrosine 697 and tyrosine 727 each carry phosphotyrosine; by LYN.

As to quaternary structure, interacts with LYN, PTPN6/SHP-1 and PTPN11/SHP-2. In terms of processing, phosphorylated on tyrosine residues by LYN. Phosphorylation at Tyr-697 and Tyr-727 is important for interaction with PTPN6/SHP-1 and PTPN11/SHP-2.

It localises to the cell membrane. Functionally, may act as receptor for class I MHC antigens. Becomes activated upon coligation with immune receptors, such as FCGR2B and the B-cell receptor. Down-regulates antigen-induced B-cell activation by recruiting phosphatases to its immunoreceptor tyrosine-based inhibitor motifs (ITIM). The sequence is that of Leukocyte immunoglobulin-like receptor subfamily B member 3A from Rattus norvegicus (Rat).